The primary structure comprises 446 residues: Argininosuccinate synthase (446 aa).

ATP contacts are provided by residues 17-25 (AFSGGLDTS) and alanine 43. An L-citrulline-binding site is contributed by tyrosine 99. ATP contacts are provided by glycine 129 and threonine 131. Residues threonine 131, asparagine 135, and aspartate 136 each contribute to the L-aspartate site. An L-citrulline-binding site is contributed by asparagine 135. Aspartate 136 is an ATP binding site. Residues arginine 139 and serine 192 each coordinate L-citrulline. Aspartate 194 is a binding site for ATP. L-citrulline contacts are provided by threonine 201, glutamate 203, and glutamate 280.

This sequence belongs to the argininosuccinate synthase family. Type 2 subfamily. As to quaternary structure, homotetramer.

The protein localises to the cytoplasm. It catalyses the reaction L-citrulline + L-aspartate + ATP = 2-(N(omega)-L-arginino)succinate + AMP + diphosphate + H(+). It functions in the pathway amino-acid biosynthesis; L-arginine biosynthesis; L-arginine from L-ornithine and carbamoyl phosphate: step 2/3. In Methylibium petroleiphilum (strain ATCC BAA-1232 / LMG 22953 / PM1), this protein is Argininosuccinate synthase.